A 288-amino-acid polypeptide reads, in one-letter code: 4-hydroxybenzoate octaprenyltransferase (288 aa).

6 helical membrane-spanning segments follow: residues 33-53 (LWALWVASPGVPPLWILAVFV), 99-119 (LFIVLVLLSFLLVLTLNTMTI), 163-183 (ESLPLSCWLMFLANILWAVAY), 213-233 (LIIGILQVAVLALMGAVGWLN), 234-254 (GLGWEYYWSLFVAAGLFGWQQ), and 268-288 (AFMNNNYVGLVLFLGLAMSYL).

Belongs to the UbiA prenyltransferase family. It depends on Mg(2+) as a cofactor.

The protein resides in the cell inner membrane. It carries out the reaction all-trans-octaprenyl diphosphate + 4-hydroxybenzoate = 4-hydroxy-3-(all-trans-octaprenyl)benzoate + diphosphate. It participates in cofactor biosynthesis; ubiquinone biosynthesis. Catalyzes the prenylation of para-hydroxybenzoate (PHB) with an all-trans polyprenyl group. Mediates the second step in the final reaction sequence of ubiquinone-8 (UQ-8) biosynthesis, which is the condensation of the polyisoprenoid side chain with PHB, generating the first membrane-bound Q intermediate 3-octaprenyl-4-hydroxybenzoate. The sequence is that of 4-hydroxybenzoate octaprenyltransferase from Klebsiella pneumoniae subsp. pneumoniae (strain ATCC 700721 / MGH 78578).